A 519-amino-acid polypeptide reads, in one-letter code: Signal transduction histidine-protein kinase/phosphatase MprB (519 aa).

Residues 1-26 lie on the Cytoplasmic side of the membrane; sequence MVRFAWRRRASLRATSSLSLRWRVML. Residues 27–47 form a helical membrane-spanning segment; that stretch reads LAMSMVAMVVVLMAFAVYVVI. At 48–163 the chain is on the extracellular side; it reads SAALYSDIDN…PTEAVMTKLR (116 aa). The chain crosses the membrane as a helical span at residues 164-184; it reads WVLLIVGSLGVAVAAVAGGMV. The Cytoplasmic segment spans residues 185–519; the sequence is TRAGLRPVGR…SVDYQSARAR (335 aa). An HAMP domain is found at 186-238; sequence RAGLRPVGRLTEAAERVARTDDLRPIPVFGSDELARLTEAFNLMLRALAESRE. In terms of domain architecture, Histidine kinase spans 246–466; sequence DAGHELRTPL…SIYVLLPGRP (221 aa). Phosphohistidine; by autocatalysis is present on His-249.

Mg(2+) serves as cofactor. It depends on Mn(2+) as a cofactor. In terms of processing, autophosphorylated.

The protein resides in the cell membrane. The enzyme catalyses ATP + protein L-histidine = ADP + protein N-phospho-L-histidine.. In terms of biological role, member of the two-component regulatory system MprB/MprA which contributes to maintaining a balance among several systems involved in stress resistance and is required for establishment and maintenance of persistent infection in the host. In response to environmental signals MprB acts both as a membrane-associated protein kinase that undergoes autophosphorylation and subsequently transfers the phosphate to MprA, and a protein phosphatase that dephosphorylates phospho-MprA. The chain is Signal transduction histidine-protein kinase/phosphatase MprB (mprB) from Mycobacterium leprae (strain TN).